A 228-amino-acid polypeptide reads, in one-letter code: Cytidylate kinase (228 aa).

Residue 10-18 (GPSGSGKGT) participates in ATP binding.

Belongs to the cytidylate kinase family. Type 1 subfamily.

The protein localises to the cytoplasm. It catalyses the reaction CMP + ATP = CDP + ADP. The enzyme catalyses dCMP + ATP = dCDP + ADP. In Acinetobacter baumannii (strain AB0057), this protein is Cytidylate kinase.